A 659-amino-acid polypeptide reads, in one-letter code: DNA mismatch repair protein MutL (659 aa).

A disordered region spans residues 338–459 (GAPRGASKPG…DTTSERDSLP (122 aa)). Positions 352-362 (SPEHSPTDRDA) are enriched in basic and acidic residues. Over residues 374 to 391 (SDGNGQRTAASGATSESP) the composition is skewed to polar residues.

Belongs to the DNA mismatch repair MutL/HexB family.

This protein is involved in the repair of mismatches in DNA. It is required for dam-dependent methyl-directed DNA mismatch repair. May act as a 'molecular matchmaker', a protein that promotes the formation of a stable complex between two or more DNA-binding proteins in an ATP-dependent manner without itself being part of a final effector complex. The sequence is that of DNA mismatch repair protein MutL from Halobacterium salinarum (strain ATCC 29341 / DSM 671 / R1).